Consider the following 355-residue polypeptide: Putative L-lysine 2,3-aminomutase (355 aa).

In terms of domain architecture, Radical SAM core spans 93 to 308; the sequence is VHQYANRVLM…KERLSGLSLP (216 aa). Residues Cys108, Cys112, and Cys115 each coordinate [4Fe-4S] cluster. Residue Lys320 is modified to N6-(pyridoxal phosphate)lysine.

Belongs to the radical SAM superfamily. KamA family. It depends on [4Fe-4S] cluster as a cofactor. Pyridoxal 5'-phosphate is required as a cofactor.

The chain is Putative L-lysine 2,3-aminomutase from Treponema pallidum (strain Nichols).